Consider the following 164-residue polypeptide: Putative 4-hydroxy-4-methyl-2-oxoglutarate aldolase (164 aa).

Residues 75-78 (GDML) and Arg97 contribute to the substrate site. Residue Asp98 coordinates a divalent metal cation.

It belongs to the class II aldolase/RraA-like family. As to quaternary structure, homotrimer. A divalent metal cation serves as cofactor.

The enzyme catalyses 4-hydroxy-4-methyl-2-oxoglutarate = 2 pyruvate. It carries out the reaction oxaloacetate + H(+) = pyruvate + CO2. Its function is as follows. Catalyzes the aldol cleavage of 4-hydroxy-4-methyl-2-oxoglutarate (HMG) into 2 molecules of pyruvate. Also contains a secondary oxaloacetate (OAA) decarboxylase activity due to the common pyruvate enolate transition state formed following C-C bond cleavage in the retro-aldol and decarboxylation reactions. In Hahella chejuensis (strain KCTC 2396), this protein is Putative 4-hydroxy-4-methyl-2-oxoglutarate aldolase.